A 159-amino-acid chain; its full sequence is MENKFNHFDNEGNAIMVDVGNKNATERIAIASGKIRVNRDTFLAIEQGTAKKGDVLGVARVAGIMAAKKTSELIPLCHPLMITNCTIDFELLPKTLEVEVTSKVKVTGNTGVEMEALTAVSTTLLTIYDMCKAIDKAMEIDNIHLRRKTGGKSGDFINE.

Substrate-binding positions include 76–78 (LCH) and 114–115 (ME). Residue D129 is part of the active site.

Belongs to the MoaC family. In terms of assembly, homohexamer; trimer of dimers.

The catalysed reaction is (8S)-3',8-cyclo-7,8-dihydroguanosine 5'-triphosphate = cyclic pyranopterin phosphate + diphosphate. It participates in cofactor biosynthesis; molybdopterin biosynthesis. Catalyzes the conversion of (8S)-3',8-cyclo-7,8-dihydroguanosine 5'-triphosphate to cyclic pyranopterin monophosphate (cPMP). The chain is Cyclic pyranopterin monophosphate synthase from Clostridium botulinum (strain Alaska E43 / Type E3).